We begin with the raw amino-acid sequence, 47 residues long: Large ribosomal subunit protein bL33C (47 aa).

The protein belongs to the bacterial ribosomal protein bL33 family.

The protein is Large ribosomal subunit protein bL33C of Staphylococcus aureus (strain MRSA252).